A 241-amino-acid chain; its full sequence is Ribosomal RNA small subunit methyltransferase G (241 aa).

S-adenosyl-L-methionine-binding positions include glycine 79, phenylalanine 84, alanine 130 to glutamate 131, and arginine 150.

It belongs to the methyltransferase superfamily. RNA methyltransferase RsmG family.

It localises to the cytoplasm. Specifically methylates the N7 position of a guanine in 16S rRNA. In Limosilactobacillus reuteri (strain DSM 20016) (Lactobacillus reuteri), this protein is Ribosomal RNA small subunit methyltransferase G.